Reading from the N-terminus, the 146-residue chain is Hemoglobin subunit beta (146 aa).

Position 1 is an N-acetylvaline (valine 1). Positions 2–146 constitute a Globin domain; it reads HLTNEEKTAV…VATALAHKYH (145 aa). Serine 44 carries the phosphoserine modification. At lysine 59 the chain carries N6-acetyllysine. Histidine 63 lines the heme b pocket. Position 82 is an N6-acetyllysine (lysine 82). Histidine 92 serves as a coordination point for heme b. Cysteine 93 is modified (S-nitrosocysteine). N6-acetyllysine is present on lysine 144.

The protein belongs to the globin family. As to quaternary structure, heterotetramer of two alpha chains and two beta chains. As to expression, red blood cells.

Its function is as follows. Involved in oxygen transport from the lung to the various peripheral tissues. The protein is Hemoglobin subunit beta (HBB) of Lyroderma lyra (Greater Asian false-vampire bat).